The following is a 443-amino-acid chain: Glutamate-1-semialdehyde 2,1-aminomutase (443 aa).

An N6-(pyridoxal phosphate)lysine modification is found at Lys272.

The protein belongs to the class-III pyridoxal-phosphate-dependent aminotransferase family. HemL subfamily. As to quaternary structure, homodimer. Pyridoxal 5'-phosphate is required as a cofactor.

It localises to the cytoplasm. It catalyses the reaction (S)-4-amino-5-oxopentanoate = 5-aminolevulinate. The protein operates within porphyrin-containing compound metabolism; protoporphyrin-IX biosynthesis; 5-aminolevulinate from L-glutamyl-tRNA(Glu): step 2/2. Its pathway is porphyrin-containing compound metabolism; chlorophyll biosynthesis. This is Glutamate-1-semialdehyde 2,1-aminomutase from Chloroflexus aurantiacus (strain ATCC 29366 / DSM 635 / J-10-fl).